A 353-amino-acid polypeptide reads, in one-letter code: Photosystem II D2 protein (353 aa).

An N-acetylthreonine modification is found at Thr2. Thr2 carries the post-translational modification Phosphothreonine. A helical transmembrane segment spans residues 41–61; the sequence is CAYFALGGWFTGTTFVTSWYT. Position 118 (His118) interacts with chlorophyll a. A helical membrane pass occupies residues 125–141; sequence GFMLRQFELARSVQLRP. Pheophytin a-binding residues include Gln130 and Asn143. Residues 153-166 form a helical membrane-spanning segment; that stretch reads VFVSVFLIYPLGQS. A chlorophyll a-binding site is contributed by His198. A helical transmembrane segment spans residues 208–228; the sequence is AALLCAIHGATVENTLFEDGD. 2 residues coordinate a plastoquinone: His215 and Phe262. His215 serves as a coordination point for Fe cation. A Fe cation-binding site is contributed by His269. A helical membrane pass occupies residues 279 to 295; sequence GLWMSAIGVVGLALNLR.

The protein belongs to the reaction center PufL/M/PsbA/D family. As to quaternary structure, PSII is composed of 1 copy each of membrane proteins PsbA, PsbB, PsbC, PsbD, PsbE, PsbF, PsbH, PsbI, PsbJ, PsbK, PsbL, PsbM, PsbT, PsbX, PsbY, PsbZ, Psb30/Ycf12, at least 3 peripheral proteins of the oxygen-evolving complex and a large number of cofactors. It forms dimeric complexes. The cofactor is The D1/D2 heterodimer binds P680, chlorophylls that are the primary electron donor of PSII, and subsequent electron acceptors. It shares a non-heme iron and each subunit binds pheophytin, quinone, additional chlorophylls, carotenoids and lipids. There is also a Cl(-1) ion associated with D1 and D2, which is required for oxygen evolution. The PSII complex binds additional chlorophylls, carotenoids and specific lipids..

The protein localises to the plastid. Its subcellular location is the chloroplast thylakoid membrane. The enzyme catalyses 2 a plastoquinone + 4 hnu + 2 H2O = 2 a plastoquinol + O2. Its function is as follows. Photosystem II (PSII) is a light-driven water:plastoquinone oxidoreductase that uses light energy to abstract electrons from H(2)O, generating O(2) and a proton gradient subsequently used for ATP formation. It consists of a core antenna complex that captures photons, and an electron transfer chain that converts photonic excitation into a charge separation. The D1/D2 (PsbA/PsbD) reaction center heterodimer binds P680, the primary electron donor of PSII as well as several subsequent electron acceptors. D2 is needed for assembly of a stable PSII complex. This chain is Photosystem II D2 protein, found in Lolium perenne (Perennial ryegrass).